The chain runs to 360 residues: Glutamate 5-kinase (360 aa).

Lys7 contributes to the ATP binding site. Ser47, Asp134, and Asn146 together coordinate substrate. ATP is bound by residues 166–167 and 210–216; these read TD and TGGISTK. The PUA domain maps to 275–356; it reads VGKITLDDGA…SSIIVVHRDV (82 aa).

This sequence belongs to the glutamate 5-kinase family.

The protein resides in the cytoplasm. The catalysed reaction is L-glutamate + ATP = L-glutamyl 5-phosphate + ADP. The protein operates within amino-acid biosynthesis; L-proline biosynthesis; L-glutamate 5-semialdehyde from L-glutamate: step 1/2. In terms of biological role, catalyzes the transfer of a phosphate group to glutamate to form L-glutamate 5-phosphate. The protein is Glutamate 5-kinase of Prochlorococcus marinus (strain AS9601).